The following is a 486-amino-acid chain: Carboxypeptidase Y homolog ARB_07161 (486 aa).

An N-terminal signal peptide occupies residues 1 to 17; that stretch reads MKGLLSLLLVGAANALA. A glycan (N-linked (GlcNAc...) asparagine) is linked at Asn-111. Ser-241 is a catalytic residue. 3 cysteine pairs are disulfide-bonded: Cys-281/Cys-305, Cys-288/Cys-298, and Cys-327/Cys-334. The active site involves Asp-403. A substrate-binding site is contributed by Cys-406. Residue Asn-430 is glycosylated (N-linked (GlcNAc...) asparagine). His-462 is a catalytic residue.

This sequence belongs to the peptidase S10 family.

The protein resides in the secreted. The enzyme catalyses Release of a C-terminal amino acid with broad specificity.. Functionally, involved in degradation of small peptides. This is Carboxypeptidase Y homolog ARB_07161 from Arthroderma benhamiae (strain ATCC MYA-4681 / CBS 112371) (Trichophyton mentagrophytes).